The chain runs to 94 residues: Fungal defensin scedosporisin-2 (94 aa).

An N-terminal signal peptide occupies residues 1 to 25 (MKFSNISIAALFTILASTAMAAPAA). Positions 26–56 (DSPDSIVAREPAPVEETYEAPSGLEKRGFGC) are excised as a propeptide. 3 residues coordinate beta-D-GlcNAc-(1-&gt;4)-Mur2Ac(oyl-L-Ala-gamma-D-Glu-L-Lys-D-Ala-D-Ala)-di-trans,octa-cis-undecaprenyl diphosphate: phenylalanine 54, glycine 55, and cysteine 56. 3 disulfides stabilise this stretch: cysteine 56–cysteine 78, cysteine 63–cysteine 91, and cysteine 67–cysteine 93. The interaction site with membrane interface stretch occupies residues 57–60 (PGSE). Histidine 66 serves as a coordination point for beta-D-GlcNAc-(1-&gt;4)-Mur2Ac(oyl-L-Ala-gamma-D-Glu-L-Lys-D-Ala-D-Ala)-di-trans,octa-cis-undecaprenyl diphosphate. The tract at residues 83-90 (IPFVGRPR) is interaction site with membrane interface. Cysteine 91 lines the beta-D-GlcNAc-(1-&gt;4)-Mur2Ac(oyl-L-Ala-gamma-D-Glu-L-Lys-D-Ala-D-Ala)-di-trans,octa-cis-undecaprenyl diphosphate pocket.

Belongs to the invertebrate defensin family.

The protein resides in the secreted. The protein localises to the target cell membrane. Functionally, antibacterial peptide potently active against Gram-positive bacteria. May act by selectively inhibiting peptidoglycan biosynthesis through complex formation with the cell wall precursor lipid II (1:1 molar ratio) thus inhibiting cell wall synthesis. Shows remarkably activity against resistant isolates such as methicillin-resistant Staphylococcus aureus (MRSA) and vancomycin-resistant Enterococci (VRE) at the concentration of micromolar level. Does not act by destroying the membrane integrity, which is consistent with its nonamphiphilic architecture. Acts more rapidly than vancomycin. Shows low hemolysis and cytotoxicity and high serum stability. In vivo, is as efficient as vancomycin to protect mouse peritonitis models from MRSA infections. The polypeptide is Fungal defensin scedosporisin-2 (Pseudallescheria apiosperma (Scedosporium apiospermum)).